A 181-amino-acid polypeptide reads, in one-letter code: HGPRTase-like protein 2 (181 aa).

Belongs to the purine/pyrimidine phosphoribosyltransferase family. Archaeal HPRT subfamily.

In terms of biological role, may catalyze a purine salvage reaction, the substrate is unknown. The sequence is that of HGPRTase-like protein 2 from Haloquadratum walsbyi (strain DSM 16854 / JCM 12705 / C23).